The following is a 302-amino-acid chain: Quinolinate synthase (302 aa).

Residues His-25 and Ser-42 each contribute to the iminosuccinate site. Cys-87 serves as a coordination point for [4Fe-4S] cluster. Iminosuccinate-binding positions include 113-115 and Ser-130; that span reads YVN. Residue Cys-172 participates in [4Fe-4S] cluster binding. Iminosuccinate is bound by residues 198–200 and Thr-215; that span reads HPE. A [4Fe-4S] cluster-binding site is contributed by Cys-260.

Belongs to the quinolinate synthase family. Type 2 subfamily. Requires [4Fe-4S] cluster as cofactor.

The protein resides in the cytoplasm. The enzyme catalyses iminosuccinate + dihydroxyacetone phosphate = quinolinate + phosphate + 2 H2O + H(+). It participates in cofactor biosynthesis; NAD(+) biosynthesis; quinolinate from iminoaspartate: step 1/1. In terms of biological role, catalyzes the condensation of iminoaspartate with dihydroxyacetone phosphate to form quinolinate. This Methanoregula boonei (strain DSM 21154 / JCM 14090 / 6A8) protein is Quinolinate synthase.